The primary structure comprises 348 residues: NADH-ubiquinone oxidoreductase chain 2 (348 aa).

A run of 9 helical transmembrane segments spans residues valine 13–leucine 33, phenylalanine 60–leucine 80, proline 96–valine 116, proline 124–tyrosine 144, isoleucine 150–glycine 170, threonine 200–leucine 220, leucine 241–phenylalanine 261, isoleucine 278–isoleucine 298, and leucine 325–leucine 345.

It belongs to the complex I subunit 2 family. As to quaternary structure, core subunit of respiratory chain NADH dehydrogenase (Complex I) which is composed of 45 different subunits. Interacts with TMEM242.

The protein localises to the mitochondrion inner membrane. The enzyme catalyses a ubiquinone + NADH + 5 H(+)(in) = a ubiquinol + NAD(+) + 4 H(+)(out). Its function is as follows. Core subunit of the mitochondrial membrane respiratory chain NADH dehydrogenase (Complex I) which catalyzes electron transfer from NADH through the respiratory chain, using ubiquinone as an electron acceptor. Essential for the catalytic activity and assembly of complex I. This Papio hamadryas (Hamadryas baboon) protein is NADH-ubiquinone oxidoreductase chain 2.